Reading from the N-terminus, the 393-residue chain is NAD(P)H-quinone oxidoreductase subunit H, chloroplastic (393 aa).

The protein belongs to the complex I 49 kDa subunit family. In terms of assembly, NDH is composed of at least 16 different subunits, 5 of which are encoded in the nucleus.

The protein resides in the plastid. The protein localises to the chloroplast thylakoid membrane. The enzyme catalyses a plastoquinone + NADH + (n+1) H(+)(in) = a plastoquinol + NAD(+) + n H(+)(out). The catalysed reaction is a plastoquinone + NADPH + (n+1) H(+)(in) = a plastoquinol + NADP(+) + n H(+)(out). NDH shuttles electrons from NAD(P)H:plastoquinone, via FMN and iron-sulfur (Fe-S) centers, to quinones in the photosynthetic chain and possibly in a chloroplast respiratory chain. The immediate electron acceptor for the enzyme in this species is believed to be plastoquinone. Couples the redox reaction to proton translocation, and thus conserves the redox energy in a proton gradient. The chain is NAD(P)H-quinone oxidoreductase subunit H, chloroplastic from Olimarabidopsis pumila (Dwarf rocket).